The following is a 104-amino-acid chain: L-rhamnose mutarotase (104 aa).

Tyrosine 18 serves as a coordination point for substrate. The active-site Proton donor is the histidine 22. Residues tyrosine 41 and 76 to 77 (WW) contribute to the substrate site.

This sequence belongs to the rhamnose mutarotase family. In terms of assembly, homodimer.

It localises to the cytoplasm. It carries out the reaction alpha-L-rhamnose = beta-L-rhamnose. It participates in carbohydrate metabolism; L-rhamnose metabolism. Involved in the anomeric conversion of L-rhamnose. This Pectobacterium carotovorum subsp. carotovorum (strain PC1) protein is L-rhamnose mutarotase.